A 320-amino-acid polypeptide reads, in one-letter code: NAC domain-containing protein 18 (320 aa).

The disordered stretch occupies residues 1 to 22; the sequence is MESTDSSGGPPPPQPNLPPGFR. Positions 9 to 18 are enriched in pro residues; that stretch reads GPPPPQPNLP. In terms of domain architecture, NAC spans 17-177; it reads LPPGFRFHPT…DWVLCRIYKK (161 aa). A DNA-binding region spans residues 118 to 183; the sequence is VGVKKALVFY…IYKKNNSTAS (66 aa).

As to expression, restricted primarily to the region of the embryo including the SAM. Expressed in the outer integument, but seems not expressed in the embryo at the torpedo stage.

Its subcellular location is the nucleus. In terms of biological role, may encode a transcription factor involved in the elaboration of shoot apical meristems (SAM). Together with NAC056/NARS1, regulates embryogenesis by regulating the development and degeneration of ovule integuments, a process required for intertissue communication between the embryo and the maternal integument. This Arabidopsis thaliana (Mouse-ear cress) protein is NAC domain-containing protein 18 (NAC018).